A 3225-amino-acid polypeptide reads, in one-letter code: Intermembrane lipid transfer protein VPS13 (3225 aa).

Residues 1 to 1390 (MLEGLVAGLL…VFAADVEQHT (1390 aa)) form an involved in phospholipid binding region. Residues 2–115 (LEGLVAGLLN…RHRLKMEKLD (114 aa)) enclose the Chorein N-terminal domain. Disordered regions lie at residues 1568–1610 (PEAP…QQLV) and 1768–1799 (AGLK…SHSG). Low complexity predominate over residues 1590-1610 (VRVGSSGRHSESSAGSGQQLV). The span at 1777–1799 (GKGTSTLATRTRHASQSAASHSG) shows a compositional bias: polar residues. In terms of domain architecture, SHR-BD spans 2290-2570 (FKVTVYSPYV…PYAWDFPAAK (281 aa)).

It belongs to the VPS13 family.

It is found in the membrane. In terms of biological role, mediates the transfer of lipids between membranes at organelle contact sites. Binds phospholipids, including phosphatidylcholine (PC), phosphatidylethanolamine (PE), phosphatidic acid (PA), and phosphatidylserine (PS). May play a role in mitochondrial lipid homeostasis, Golgi vesicle transport, reticulophagy, actin cytoskeleton organization and formation of the prospore membrane. This chain is Intermembrane lipid transfer protein VPS13, found in Chaetomium thermophilum (strain DSM 1495 / CBS 144.50 / IMI 039719) (Thermochaetoides thermophila).